The chain runs to 198 residues: MICOS complex subunit Mic26 (198 aa).

Positions 1–23 (MFKVIQRSVGPASLSLLTFRVYA) are cleaved as a signal peptide. The N-linked (GlcNAc...) asparagine glycan is linked to asparagine 63. Residues 108-128 (PGFFPRLGVIGFAGFVGLLFA) traverse the membrane as a helical segment.

Belongs to the apolipoprotein O/MICOS complex subunit Mic27 family. In terms of assembly, component of the mitochondrial contact site and cristae organizing system (MICOS) complex, composed of at least MICOS10/MIC10, CHCHD3/MIC19, CHCHD6/MIC25, APOOL/MIC27, IMMT/MIC60, APOO/MIC23/MIC26 and MICOS13/MIC13. This complex was also known under the names MINOS or MitOS complex. The MICOS complex associates with mitochondrial outer membrane proteins SAMM50, MTX1 and MTX2 (together described as components of the mitochondrial outer membrane sorting assembly machinery (SAM) complex) and DNAJC11, mitochondrial inner membrane protein TMEM11 and with HSPA9. The MICOS and SAM complexes together with DNAJC11 are part of a large protein complex spanning both membranes termed the mitochondrial intermembrane space bridging (MIB) complex. Interacts with IMMT/MIC60. Interacts with MICOS10/MIC10 and APOOL/MIC27.

It localises to the mitochondrion inner membrane. It is found in the mitochondrion. The protein localises to the endoplasmic reticulum membrane. The protein resides in the golgi apparatus membrane. Component of the MICOS complex, a large protein complex of the mitochondrial inner membrane that plays crucial roles in the maintenance of crista junctions, inner membrane architecture, and formation of contact sites to the outer membrane. Plays a crucial role in crista junction formation and mitochondrial function. Can induce cardiac lipotoxicity by enhancing mitochondrial respiration and fatty acid metabolism in cardiac myoblasts. Promotes cholesterol efflux from macrophage cells. Detected in HDL, LDL and VLDL. Secreted by a microsomal triglyceride transfer protein (MTTP)-dependent mechanism, probably as a VLDL-associated protein that is subsequently transferred to HDL. The protein is MICOS complex subunit Mic26 (Apoo) of Mus musculus (Mouse).